The following is a 190-amino-acid chain: Signal peptidase complex subunit 3 (190 aa).

Residues 1–9 (MFNIVTRFQ) are Cytoplasmic-facing. A helical; Signal-anchor for type II membrane protein transmembrane segment spans residues 10–32 (YAANQALTSSIIIAGIVIVSSLL). Over 33-190 (QLYSNNAWSL…EYVDKKKEQK (158 aa)) the chain is Lumenal.

This sequence belongs to the SPCS3 family. As to quaternary structure, component of the signal peptidase complex (SPC) composed of a catalytic subunit SEC11 and three accessory subunits SPC1, SPC2 and SPC3. The complex induces a local thinning of the ER membrane which is used to measure the length of the signal peptide (SP) h-region of protein substrates. This ensures the selectivity of the complex towards h-regions shorter than 18-20 amino acids. SPC associates with the translocon complex.

The protein localises to the endoplasmic reticulum membrane. Its function is as follows. Essential component of the signal peptidase complex (SPC) which catalyzes the cleavage of N-terminal signal sequences from nascent proteins as they are translocated into the lumen of the endoplasmic reticulum. Essential for the SPC catalytic activity, possibly by stabilizing and positioning the active center of the complex close to the lumenal surface. Essential for viability. The sequence is that of Signal peptidase complex subunit 3 (SPC3) from Debaryomyces hansenii (strain ATCC 36239 / CBS 767 / BCRC 21394 / JCM 1990 / NBRC 0083 / IGC 2968) (Yeast).